Here is a 351-residue protein sequence, read N- to C-terminus: Photosystem II D2 protein (351 aa).

Residues 39-59 (CSYLALGAWFTGTTFVTSWYT) traverse the membrane as a helical segment. His116 lines the chlorophyll a pocket. Residues 123–139 (GFCLRQFEIARLVGLRP) form a helical membrane-spanning segment. Residues Gln128 and Asn141 each coordinate pheophytin a. Residues 151 to 164 (VFVSVFLLYPLGQA) traverse the membrane as a helical segment. A chlorophyll a-binding site is contributed by His196. A helical transmembrane segment spans residues 206–226 (GALLCAIHGATVQNTLFEDGE). Residues His213 and Phe260 each coordinate a plastoquinone. His213 contacts Fe cation. Position 267 (His267) interacts with Fe cation. Residues 277-293 (GLWASSIGIVGLALNLR) form a helical membrane-spanning segment.

This sequence belongs to the reaction center PufL/M/PsbA/D family. In terms of assembly, PSII is composed of 1 copy each of membrane proteins PsbA, PsbB, PsbC, PsbD, PsbE, PsbF, PsbH, PsbI, PsbJ, PsbK, PsbL, PsbM, PsbT, PsbX, PsbY, PsbZ, Psb30/Ycf12, at least 3 peripheral proteins of the oxygen-evolving complex and a large number of cofactors. It forms dimeric complexes. Requires The D1/D2 heterodimer binds P680, chlorophylls that are the primary electron donor of PSII, and subsequent electron acceptors. It shares a non-heme iron and each subunit binds pheophytin, quinone, additional chlorophylls, carotenoids and lipids. There is also a Cl(-1) ion associated with D1 and D2, which is required for oxygen evolution. The PSII complex binds additional chlorophylls, carotenoids and specific lipids. as cofactor.

The protein resides in the plastid. The protein localises to the chloroplast thylakoid membrane. It carries out the reaction 2 a plastoquinone + 4 hnu + 2 H2O = 2 a plastoquinol + O2. Its function is as follows. Photosystem II (PSII) is a light-driven water:plastoquinone oxidoreductase that uses light energy to abstract electrons from H(2)O, generating O(2) and a proton gradient subsequently used for ATP formation. It consists of a core antenna complex that captures photons, and an electron transfer chain that converts photonic excitation into a charge separation. The D1/D2 (PsbA/PsbD) reaction center heterodimer binds P680, the primary electron donor of PSII as well as several subsequent electron acceptors. D2 is needed for assembly of a stable PSII complex. The polypeptide is Photosystem II D2 protein (Cyanidioschyzon merolae (strain NIES-3377 / 10D) (Unicellular red alga)).